Reading from the N-terminus, the 514-residue chain is GTPase Obg (514 aa).

The Obg domain maps to 2–159 (ATFVDRVTVH…GDILLELKTV (158 aa)). The disordered stretch occupies residues 62–88 (RRPHRSSGNGGFGMGDHRSGHTGEDLE). Residues 76 to 85 (GDHRSGHTGE) show a composition bias toward basic and acidic residues. The OBG-type G domain occupies 160–336 (ADIALVGYPS…LSFALAELVE (177 aa)). GTP contacts are provided by residues 166 to 173 (GYPSAGKS), 191 to 195 (FTTLH), 212 to 215 (DVPG), 288 to 291 (NKID), and 317 to 319 (STV). Mg(2+)-binding residues include S173 and T193. In terms of domain architecture, OCT spans 356 to 440 (PKTVDDSGFV…ENGVVFDWEP (85 aa)).

The protein belongs to the TRAFAC class OBG-HflX-like GTPase superfamily. OBG GTPase family. As to quaternary structure, monomer. It depends on Mg(2+) as a cofactor.

The protein resides in the cytoplasm. An essential GTPase which binds GTP, GDP and possibly (p)ppGpp with moderate affinity, with high nucleotide exchange rates and a fairly low GTP hydrolysis rate. Plays a role in control of the cell cycle, stress response, ribosome biogenesis and in those bacteria that undergo differentiation, in morphogenesis control. The sequence is that of GTPase Obg from Leifsonia xyli subsp. xyli (strain CTCB07).